Reading from the N-terminus, the 397-residue chain is Purine nucleoside transport protein NupG (397 aa).

The next 11 helical transmembrane spans lie at 1–21 (MYFLLNLVGLIVIMAVVFLCS), 32–52 (IITLIVLELLITWFMLGTKVG), 62–82 (FFTWLIACASDGIAFAFPSVM), 97–117 (IIFIVTFFDILTYFGILPWLI), 133–153 (LESFFSIQMMFLGNTEALAVI), 165–185 (LLTFGLMSMSSISGSIIGSYL), 187–207 (MVPATYVFTAIPLNCLNALII), 242–262 (MLVGMNMVIVILAMVIGYVAL), 282–302 (IFAYLFSPFAFLLGLPVHDAM), 335–355 (VAVATTFLTSFANFSTVGMIY), and 377–397 (LLVSGIAVSLLSAAIVGLFVW).

The protein belongs to the concentrative nucleoside transporter (CNT) (TC 2.A.41) family.

The protein localises to the cell membrane. Its function is as follows. Involved in the uptake of the purine ribonucleosides inosine and guanosine. This Bacillus subtilis (strain 168) protein is Purine nucleoside transport protein NupG (nupG).